A 421-amino-acid chain; its full sequence is 4-hydroxy-3-methylbut-2-en-1-yl diphosphate synthase (flavodoxin) (421 aa).

[4Fe-4S] cluster contacts are provided by Cys311, Cys314, Cys357, and Glu364.

Belongs to the IspG family. [4Fe-4S] cluster is required as a cofactor.

The catalysed reaction is (2E)-4-hydroxy-3-methylbut-2-enyl diphosphate + oxidized [flavodoxin] + H2O + 2 H(+) = 2-C-methyl-D-erythritol 2,4-cyclic diphosphate + reduced [flavodoxin]. It participates in isoprenoid biosynthesis; isopentenyl diphosphate biosynthesis via DXP pathway; isopentenyl diphosphate from 1-deoxy-D-xylulose 5-phosphate: step 5/6. In terms of biological role, converts 2C-methyl-D-erythritol 2,4-cyclodiphosphate (ME-2,4cPP) into 1-hydroxy-2-methyl-2-(E)-butenyl 4-diphosphate. The protein is 4-hydroxy-3-methylbut-2-en-1-yl diphosphate synthase (flavodoxin) of Xanthomonas euvesicatoria pv. vesicatoria (strain 85-10) (Xanthomonas campestris pv. vesicatoria).